A 414-amino-acid chain; its full sequence is Mannan endo-1,4-beta-mannosidase 2 (414 aa).

Residues 1 to 25 form the signal peptide; the sequence is MAYFQRLISCIFVLFLLSLAFACEA. Trp-95 and Asn-210 together coordinate substrate. Glu-211 serves as the catalytic Proton donor. Tyr-288 is a substrate binding site. The active-site Nucleophile is the Glu-328. Trp-370 is a substrate binding site.

Belongs to the glycosyl hydrolase 5 (cellulase A) family.

Its subcellular location is the secreted. The catalysed reaction is Random hydrolysis of (1-&gt;4)-beta-D-mannosidic linkages in mannans, galactomannans and glucomannans.. Functionally, possesses endo-beta-mannanase activity in vitro. May be involved in seed germination by weakening the endosperm cap prior to radicle emergence. The protein is Mannan endo-1,4-beta-mannosidase 2 (MAN2) of Solanum lycopersicum (Tomato).